The chain runs to 674 residues: Kelch repeat and BTB domain-containing protein 6 (674 aa).

The tract at residues 1-28 (MQSREDAPRSRRLASPRGGKRPKKIHKP) is disordered. A compositionally biased stretch (basic residues) spans 10-27 (SRRLASPRGGKRPKKIHK). The BTB domain maps to 63-138 (CDVTIEVVTP…CYTGRVSLSE (76 aa)). Kelch repeat units follow at residues 386–435 (AVCI…YLNG), 436–484 (YIYI…VIRD), 486–523 (LYAL…VFNE), 524–564 (EIYC…IIKH), 567–616 (KLLL…CLSA), and 642–673 (TEWD…RVAP). Positions 631 to 674 (TEEEEIPSESSTEWDLGGFSEPDSESGSSSSLSDDDFWVRVAPQ) are disordered. The ATG8 interaction motif (AIM) signature appears at 668–671 (WVRV).

As to quaternary structure, core component of a BCR3 (BTB-CUL3-RBX1) E3 ubiquitin ligase complex, also named Cul3-RING ubiquitin ligase complex CUL3(KBTBD6/7), composed of CUL3, RBX1, KBTBD6 and KBTBD7. Interacts with GABARAP; the interaction is direct and is required for the ubiquitination of TIAM1. Interacts with GABARAPL1, GABARAPL2 and MAP1LC3B; the interaction is direct.

Its subcellular location is the cytoplasm. It is found in the nucleus. The protein operates within protein modification; protein ubiquitination. As part of the CUL3(KBTBD6/7) E3 ubiquitin ligase complex functions as a substrate adapter for the RAC1 guanine exchange factor (GEF) TIAM1, mediating its 'Lys-48' ubiquitination and proteasomal degradation. By controlling this ubiquitination, regulates RAC1 signal transduction and downstream biological processes including the organization of the cytoskeleton, cell migration and cell proliferation. Ubiquitination of TIAM1 requires the membrane-associated protein GABARAP which may restrict locally the activity of the complex. The protein is Kelch repeat and BTB domain-containing protein 6 of Homo sapiens (Human).